The primary structure comprises 155 residues: MSRRSEAPKRQILPDPKYKSDLLAKFINTVMKDGKKSVAERVLYGALTQIEGKKGDGIQVLEQALDNVRPRVEVKSRRVGGATYQVPVEVRPVRQNALAMRWIVDAARKRGEKSMALKLAGELMDAADSKGSAVKKREDTHRMAEANKAFSHYRW.

Belongs to the universal ribosomal protein uS7 family. Part of the 30S ribosomal subunit. Contacts proteins S9 and S11.

Functionally, one of the primary rRNA binding proteins, it binds directly to 16S rRNA where it nucleates assembly of the head domain of the 30S subunit. Is located at the subunit interface close to the decoding center, probably blocks exit of the E-site tRNA. This Thioalkalivibrio sulfidiphilus (strain HL-EbGR7) protein is Small ribosomal subunit protein uS7.